Reading from the N-terminus, the 752-residue chain is Phosphoribosylformylglycinamidine synthase subunit PurL (752 aa).

H58 is an active-site residue. Residues Y61 and K103 each contribute to the ATP site. E105 contacts Mg(2+). Substrate contacts are provided by residues 106-109 (SHNH) and R128. H107 serves as the catalytic Proton acceptor. D129 contributes to the Mg(2+) binding site. Substrate is bound at residue Q253. Residue D281 coordinates Mg(2+). A substrate-binding site is contributed by 325 to 327 (ESQ). ATP is bound by residues D513 and G550. N551 is a binding site for Mg(2+). S553 contributes to the substrate binding site.

Belongs to the FGAMS family. In terms of assembly, monomer. Part of the FGAM synthase complex composed of 1 PurL, 1 PurQ and 2 PurS subunits.

Its subcellular location is the cytoplasm. The catalysed reaction is N(2)-formyl-N(1)-(5-phospho-beta-D-ribosyl)glycinamide + L-glutamine + ATP + H2O = 2-formamido-N(1)-(5-O-phospho-beta-D-ribosyl)acetamidine + L-glutamate + ADP + phosphate + H(+). The protein operates within purine metabolism; IMP biosynthesis via de novo pathway; 5-amino-1-(5-phospho-D-ribosyl)imidazole from N(2)-formyl-N(1)-(5-phospho-D-ribosyl)glycinamide: step 1/2. Its function is as follows. Part of the phosphoribosylformylglycinamidine synthase complex involved in the purines biosynthetic pathway. Catalyzes the ATP-dependent conversion of formylglycinamide ribonucleotide (FGAR) and glutamine to yield formylglycinamidine ribonucleotide (FGAM) and glutamate. The FGAM synthase complex is composed of three subunits. PurQ produces an ammonia molecule by converting glutamine to glutamate. PurL transfers the ammonia molecule to FGAR to form FGAM in an ATP-dependent manner. PurS interacts with PurQ and PurL and is thought to assist in the transfer of the ammonia molecule from PurQ to PurL. In Streptomyces coelicolor (strain ATCC BAA-471 / A3(2) / M145), this protein is Phosphoribosylformylglycinamidine synthase subunit PurL.